We begin with the raw amino-acid sequence, 205 residues long: Dephospho-CoA kinase (205 aa).

The DPCK domain occupies 4-203; it reads KIGITGGIGS…QKIHYLCSAK (200 aa). 12-17 is an ATP binding site; sequence GSGKSV.

It belongs to the CoaE family.

Its subcellular location is the cytoplasm. The enzyme catalyses 3'-dephospho-CoA + ATP = ADP + CoA + H(+). Its pathway is cofactor biosynthesis; coenzyme A biosynthesis; CoA from (R)-pantothenate: step 5/5. Catalyzes the phosphorylation of the 3'-hydroxyl group of dephosphocoenzyme A to form coenzyme A. The polypeptide is Dephospho-CoA kinase (Bacteroides fragilis (strain ATCC 25285 / DSM 2151 / CCUG 4856 / JCM 11019 / LMG 10263 / NCTC 9343 / Onslow / VPI 2553 / EN-2)).